The primary structure comprises 364 residues: 4-hydroxythreonine-4-phosphate dehydrogenase (364 aa).

Positions 148 and 149 each coordinate substrate. A divalent metal cation-binding residues include H177, H216, and H301. Substrate-binding residues include K309, N318, and R327.

It belongs to the PdxA family. In terms of assembly, homodimer. It depends on Zn(2+) as a cofactor. The cofactor is Mg(2+). Co(2+) serves as cofactor.

It localises to the cytoplasm. The enzyme catalyses 4-(phosphooxy)-L-threonine + NAD(+) = 3-amino-2-oxopropyl phosphate + CO2 + NADH. It participates in cofactor biosynthesis; pyridoxine 5'-phosphate biosynthesis; pyridoxine 5'-phosphate from D-erythrose 4-phosphate: step 4/5. In terms of biological role, catalyzes the NAD(P)-dependent oxidation of 4-(phosphooxy)-L-threonine (HTP) into 2-amino-3-oxo-4-(phosphooxy)butyric acid which spontaneously decarboxylates to form 3-amino-2-oxopropyl phosphate (AHAP). This is 4-hydroxythreonine-4-phosphate dehydrogenase from Campylobacter jejuni subsp. jejuni serotype O:2 (strain ATCC 700819 / NCTC 11168).